Reading from the N-terminus, the 201-residue chain is Lipoprotein signal peptidase (201 aa).

The next 3 helical transmembrane spans lie at 33–53 (LLLSIAAVVLTLDIVTKVLAV), 86–106 (GYTWVLTLIATGVVIGIFWMG), and 110–130 (VSSWWALGLGMILGGAMGNLV). Catalysis depends on residues aspartate 146 and aspartate 160. The helical transmembrane segment at 158–178 (VADPSVVVGAILLVVLSIFGF) threads the bilayer.

This sequence belongs to the peptidase A8 family.

Its subcellular location is the cell membrane. The catalysed reaction is Release of signal peptides from bacterial membrane prolipoproteins. Hydrolyzes -Xaa-Yaa-Zaa-|-(S,diacylglyceryl)Cys-, in which Xaa is hydrophobic (preferably Leu), and Yaa (Ala or Ser) and Zaa (Gly or Ala) have small, neutral side chains.. It functions in the pathway protein modification; lipoprotein biosynthesis (signal peptide cleavage). In terms of biological role, this protein specifically catalyzes the removal of signal peptides from prolipoproteins. This Mycobacterium leprae (strain Br4923) protein is Lipoprotein signal peptidase.